We begin with the raw amino-acid sequence, 121 residues long: Large ribosomal subunit protein bL12 (121 aa).

Belongs to the bacterial ribosomal protein bL12 family. Homodimer. Part of the ribosomal stalk of the 50S ribosomal subunit. Forms a multimeric L10(L12)X complex, where L10 forms an elongated spine to which 2 to 4 L12 dimers bind in a sequential fashion. Binds GTP-bound translation factors.

Its function is as follows. Forms part of the ribosomal stalk which helps the ribosome interact with GTP-bound translation factors. Is thus essential for accurate translation. The sequence is that of Large ribosomal subunit protein bL12 from Pseudomonas fluorescens (strain ATCC BAA-477 / NRRL B-23932 / Pf-5).